The chain runs to 261 residues: Cytochrome c oxidase subunit 3 (261 aa).

The Mitochondrial matrix segment spans residues methionine 1 to proline 15. Residues tryptophan 16–tryptophan 34 form a helical membrane-spanning segment. Topologically, residues phenylalanine 35–methionine 40 are mitochondrial intermembrane. The helical transmembrane segment at isoleucine 41–threonine 66 threads the bilayer. The Mitochondrial matrix segment spans residues phenylalanine 67–threonine 72. The helical transmembrane segment at proline 73–serine 105 threads the bilayer. Residues leucine 106–glutamate 128 lie on the Mitochondrial intermembrane side of the membrane. A helical transmembrane segment spans residues valine 129–methionine 152. Topologically, residues glutamate 153–asparagine 155 are mitochondrial matrix. The helical transmembrane segment at arginine 156–glutamate 183 threads the bilayer. The Mitochondrial intermembrane portion of the chain corresponds to alanine 184–aspartate 190. The chain crosses the membrane as a helical span at residues glycine 191 to valine 223. The Mitochondrial matrix portion of the chain corresponds to lysine 224 to histidine 232. The chain crosses the membrane as a helical span at residues phenylalanine 233 to isoleucine 256. The Mitochondrial intermembrane portion of the chain corresponds to tyrosine 257 to serine 261.

Belongs to the cytochrome c oxidase subunit 3 family. As to quaternary structure, component of the cytochrome c oxidase (complex IV, CIV), a multisubunit enzyme composed of 14 subunits. The complex is composed of a catalytic core of 3 subunits MT-CO1, MT-CO2 and MT-CO3, encoded in the mitochondrial DNA, and 11 supernumerary subunits COX4I, COX5A, COX5B, COX6A, COX6B, COX6C, COX7A, COX7B, COX7C, COX8 and NDUFA4, which are encoded in the nuclear genome. The complex exists as a monomer or a dimer and forms supercomplexes (SCs) in the inner mitochondrial membrane with NADH-ubiquinone oxidoreductase (complex I, CI) and ubiquinol-cytochrome c oxidoreductase (cytochrome b-c1 complex, complex III, CIII), resulting in different assemblies (supercomplex SCI(1)III(2)IV(1) and megacomplex MCI(2)III(2)IV(2)).

It localises to the mitochondrion inner membrane. It catalyses the reaction 4 Fe(II)-[cytochrome c] + O2 + 8 H(+)(in) = 4 Fe(III)-[cytochrome c] + 2 H2O + 4 H(+)(out). In terms of biological role, component of the cytochrome c oxidase, the last enzyme in the mitochondrial electron transport chain which drives oxidative phosphorylation. The respiratory chain contains 3 multisubunit complexes succinate dehydrogenase (complex II, CII), ubiquinol-cytochrome c oxidoreductase (cytochrome b-c1 complex, complex III, CIII) and cytochrome c oxidase (complex IV, CIV), that cooperate to transfer electrons derived from NADH and succinate to molecular oxygen, creating an electrochemical gradient over the inner membrane that drives transmembrane transport and the ATP synthase. Cytochrome c oxidase is the component of the respiratory chain that catalyzes the reduction of oxygen to water. Electrons originating from reduced cytochrome c in the intermembrane space (IMS) are transferred via the dinuclear copper A center (CU(A)) of subunit 2 and heme A of subunit 1 to the active site in subunit 1, a binuclear center (BNC) formed by heme A3 and copper B (CU(B)). The BNC reduces molecular oxygen to 2 water molecules using 4 electrons from cytochrome c in the IMS and 4 protons from the mitochondrial matrix. The protein is Cytochrome c oxidase subunit 3 (MT-CO3) of Balaenoptera musculus (Blue whale).